We begin with the raw amino-acid sequence, 54 residues long: Ovomucoid (54 aa).

The 51-residue stretch at 4–54 (VDCSDYPKPVCSLEYMPLCGSDSKTYSNKCDFCNAFVDSNGTLSLSHFGKC) folds into the Kazal-like domain. 3 disulfides stabilise this stretch: Cys-6-Cys-36, Cys-14-Cys-33, and Cys-22-Cys-54. Asn-43 carries N-linked (GlcNAc...) asparagine glycosylation.

Its subcellular location is the secreted. In Circus aeruginosus (Western marsh harrier), this protein is Ovomucoid.